We begin with the raw amino-acid sequence, 133 residues long: Profilin Sal k 4.0101 (133 aa).

C95 and C117 form a disulfide bridge.

It belongs to the profilin family. As to quaternary structure, occurs in many kinds of cells as a complex with monomeric actin in a 1:1 ratio. As to expression, expressed in pollen.

The protein localises to the cytoplasm. It is found in the cytoskeleton. Binds to actin and affects the structure of the cytoskeleton. At high concentrations, profilin prevents the polymerization of actin, whereas it enhances it at low concentrations. The sequence is that of Profilin Sal k 4.0101 from Kali turgidum (Prickly saltwort).